Reading from the N-terminus, the 285-residue chain is 2-dehydro-3-deoxyphosphooctonate aldolase (285 aa).

It belongs to the KdsA family.

Its subcellular location is the cytoplasm. The enzyme catalyses D-arabinose 5-phosphate + phosphoenolpyruvate + H2O = 3-deoxy-alpha-D-manno-2-octulosonate-8-phosphate + phosphate. Its pathway is carbohydrate biosynthesis; 3-deoxy-D-manno-octulosonate biosynthesis; 3-deoxy-D-manno-octulosonate from D-ribulose 5-phosphate: step 2/3. The protein operates within bacterial outer membrane biogenesis; lipopolysaccharide biosynthesis. The sequence is that of 2-dehydro-3-deoxyphosphooctonate aldolase from Delftia acidovorans (strain DSM 14801 / SPH-1).